The following is a 159-amino-acid chain: SsrA-binding protein (159 aa).

Belongs to the SmpB family.

The protein localises to the cytoplasm. In terms of biological role, required for rescue of stalled ribosomes mediated by trans-translation. Binds to transfer-messenger RNA (tmRNA), required for stable association of tmRNA with ribosomes. tmRNA and SmpB together mimic tRNA shape, replacing the anticodon stem-loop with SmpB. tmRNA is encoded by the ssrA gene; the 2 termini fold to resemble tRNA(Ala) and it encodes a 'tag peptide', a short internal open reading frame. During trans-translation Ala-aminoacylated tmRNA acts like a tRNA, entering the A-site of stalled ribosomes, displacing the stalled mRNA. The ribosome then switches to translate the ORF on the tmRNA; the nascent peptide is terminated with the 'tag peptide' encoded by the tmRNA and targeted for degradation. The ribosome is freed to recommence translation, which seems to be the essential function of trans-translation. This chain is SsrA-binding protein, found in Saccharophagus degradans (strain 2-40 / ATCC 43961 / DSM 17024).